Consider the following 551-residue polypeptide: Nose resistant to fluoxetine protein 5 (551 aa).

An N-terminal signal peptide occupies residues 1–20 (MSRNFHIFFLLVSIIQVGNS). A disulfide bridge links Cys151 with Cys232. A disordered region spans residues 241 to 265 (EDSEQEEGNVETTVAPTPDDDNSTL).

Belongs to the BPI/LBP/Plunc superfamily. BPI/LBP family. In terms of assembly, interacts with ttr-52. Expressed in the body wall muscle cells and detected at the basal surface of pharyngeal cells and basal-lateral membranes of the intestine.

The protein localises to the secreted. Functionally, plays a role in the uptake of a range of molecules including phosphatidylserine, lipids and xenobiotic compounds from the intestine to surrounding tissues. Possesses lipid transfer activity. Mediates transport of lipids from intestine to reproductive tract. Binds phosphatidylserine. Plays a role in efficient clearance of cell corpses by mediating phosphatidylserine appearance on phagocytic cells, thus promoting phagocytic engulfment of apoptotic cells. Vital for embryonic development. The chain is Nose resistant to fluoxetine protein 5 from Caenorhabditis elegans.